A 488-amino-acid polypeptide reads, in one-letter code: Glutamyl-tRNA(Gln) amidotransferase subunit A (488 aa).

Catalysis depends on charge relay system residues Lys78 and Ser153. The active-site Acyl-ester intermediate is the Ser177.

This sequence belongs to the amidase family. GatA subfamily. Heterotrimer of A, B and C subunits.

It carries out the reaction L-glutamyl-tRNA(Gln) + L-glutamine + ATP + H2O = L-glutaminyl-tRNA(Gln) + L-glutamate + ADP + phosphate + H(+). In terms of biological role, allows the formation of correctly charged Gln-tRNA(Gln) through the transamidation of misacylated Glu-tRNA(Gln) in organisms which lack glutaminyl-tRNA synthetase. The reaction takes place in the presence of glutamine and ATP through an activated gamma-phospho-Glu-tRNA(Gln). The protein is Glutamyl-tRNA(Gln) amidotransferase subunit A of Thermoanaerobacter pseudethanolicus (strain ATCC 33223 / 39E) (Clostridium thermohydrosulfuricum).